The primary structure comprises 675 residues: DNA ligase (675 aa).

NAD(+) is bound by residues 36–40 (DAVYD), 85–86 (SL), and Glu118. Catalysis depends on Lys120, which acts as the N6-AMP-lysine intermediate. Residues Arg141, Glu178, Lys298, and Lys322 each coordinate NAD(+). Zn(2+) contacts are provided by Cys416, Cys419, Cys434, and Cys439. Positions 598-675 (TQPQTLSGKT…SEADLLALLQ (78 aa)) constitute a BRCT domain.

This sequence belongs to the NAD-dependent DNA ligase family. LigA subfamily. The cofactor is Mg(2+). Mn(2+) is required as a cofactor.

The enzyme catalyses NAD(+) + (deoxyribonucleotide)n-3'-hydroxyl + 5'-phospho-(deoxyribonucleotide)m = (deoxyribonucleotide)n+m + AMP + beta-nicotinamide D-nucleotide.. DNA ligase that catalyzes the formation of phosphodiester linkages between 5'-phosphoryl and 3'-hydroxyl groups in double-stranded DNA using NAD as a coenzyme and as the energy source for the reaction. It is essential for DNA replication and repair of damaged DNA. This is DNA ligase from Acaryochloris marina (strain MBIC 11017).